The primary structure comprises 447 residues: Oxysterols receptor LXR-alpha (447 aa).

Disordered regions lie at residues 1 to 37 (MSLW…GGSS) and 65 to 88 (ALLT…KKGP). The segment at 1–96 (MSLWLGAPVP…GPAPKMLGNE (96 aa)) is transactivation AF-1; required for ligand-independent transactivation function. Over residues 24–37 (GAQDASSQAQGGSS) the composition is skewed to low complexity. The segment at residues 95-170 (NELCSVCGDK…AGMREECVLS (76 aa)) is a DNA-binding region (nuclear receptor). 2 NR C4-type zinc fingers span residues 98–118 (CSVC…CEGC) and 134–158 (CHSG…LRKC). The disordered stretch occupies residues 180–202 (KRQEEEQAHATSLPPRASSPPQI). Residues 205–447 (QLSPEQLGMI…LLSEIWDVHE (243 aa)) form a transactivation AF-2; required for ligand-dependent transactivation function; mediates interaction with CCAR2 region. Residues 209–447 (EQLGMIEKLV…LLSEIWDVHE (239 aa)) form the NR LBD domain.

Belongs to the nuclear hormone receptor family. NR1 subfamily. In terms of assembly, heterodimer of NR1H3 and RXR (retinoic acid receptor). Interacts with CCAR2 (via N-terminus) in a ligand-independent manner. Interacts with SIRT1 and this interaction is inhibited by CCAR2. Interacts with GPS2. Post-translationally, ubiquitinated by UBR5, leading to its degradation: UBR5 specifically recognizes and binds ligand-bound NR1H3 when it is not associated with coactivators (NCOAs). In presence of NCOAs, the UBR5-degron is not accessible, preventing its ubiquitination and degradation. Visceral organs specific expression. Strong expression was found in liver, kidney and intestine followed by spleen and to a lesser extent the adrenals.

It is found in the nucleus. The protein resides in the cytoplasm. Its function is as follows. Nuclear receptor that exhibits a ligand-dependent transcriptional activation activity. Interaction with retinoic acid receptor (RXR) shifts RXR from its role as a silent DNA-binding partner to an active ligand-binding subunit in mediating retinoid responses through target genes defined by LXRES. LXRES are DR4-type response elements characterized by direct repeats of two similar hexanuclotide half-sites spaced by four nucleotides. Plays an important role in the regulation of cholesterol homeostasis, regulating cholesterol uptake through MYLIP-dependent ubiquitination of LDLR, VLDLR and LRP8. Interplays functionally with RORA for the regulation of genes involved in liver metabolism. Induces LPCAT3-dependent phospholipid remodeling in endoplasmic reticulum (ER) membranes of hepatocytes, driving SREBF1 processing and lipogenesis. Via LPCAT3, triggers the incorporation of arachidonate into phosphatidylcholines of ER membranes, increasing membrane dynamics and enabling triacylglycerols transfer to nascent very low-density lipoprotein (VLDL) particles. Via LPCAT3 also counteracts lipid-induced ER stress response and inflammation, likely by modulating SRC kinase membrane compartmentalization and limiting the synthesis of lipid inflammatory mediators. In Homo sapiens (Human), this protein is Oxysterols receptor LXR-alpha (NR1H3).